The primary structure comprises 365 residues: MPNPLPLVFDAPRRAMPPRHFADLDESGRAAAVAELGLPAFRAKQLANQYYGRLIADPTQMTDLPAAVRERVADALFPTLFGAAREIECDSGETRKVLWRAVDGTTFESVLMRYPDRNTVCISSQAGCGMACPFCATGQGGLKRNLSTAEILEQVRAASAELRDRDGGRLSNVVFMGMGEPLANYNRVVAAVRRITASSPNGFGISARSVTVSTVGLAPAIRKLADEKLNVTLALSLHTPDDELRDTLVPVNNRWKVDEVLDAARYYADVTGRRVSIEYALIRDVNDQPWRADLLGKKLHGELGPLVHVNLIPLNPTPGSEWDASPKPVEREFVRRVRAKGVSCTVRDTRGREIAAACGQLAAEG.

The active-site Proton acceptor is the glutamate 108. The Radical SAM core domain occupies 114–352 (YPDRNTVCIS…SCTVRDTRGR (239 aa)). Cysteine 121 and cysteine 358 are disulfide-bonded. Residues cysteine 128, cysteine 132, and cysteine 135 each coordinate [4Fe-4S] cluster. S-adenosyl-L-methionine contacts are provided by residues 179–180 (GE), serine 213, 236–238 (SLH), and asparagine 315. Cysteine 358 serves as the catalytic S-methylcysteine intermediate.

Belongs to the radical SAM superfamily. RlmN family. Requires [4Fe-4S] cluster as cofactor.

The protein resides in the cytoplasm. It catalyses the reaction adenosine(2503) in 23S rRNA + 2 reduced [2Fe-2S]-[ferredoxin] + 2 S-adenosyl-L-methionine = 2-methyladenosine(2503) in 23S rRNA + 5'-deoxyadenosine + L-methionine + 2 oxidized [2Fe-2S]-[ferredoxin] + S-adenosyl-L-homocysteine. It carries out the reaction adenosine(37) in tRNA + 2 reduced [2Fe-2S]-[ferredoxin] + 2 S-adenosyl-L-methionine = 2-methyladenosine(37) in tRNA + 5'-deoxyadenosine + L-methionine + 2 oxidized [2Fe-2S]-[ferredoxin] + S-adenosyl-L-homocysteine. Its function is as follows. Specifically methylates position 2 of adenine 2503 in 23S rRNA and position 2 of adenine 37 in tRNAs. This chain is Probable dual-specificity RNA methyltransferase RlmN, found in Mycolicibacterium vanbaalenii (strain DSM 7251 / JCM 13017 / BCRC 16820 / KCTC 9966 / NRRL B-24157 / PYR-1) (Mycobacterium vanbaalenii).